The sequence spans 628 residues: DNA mismatch repair protein MutL (628 aa).

Residues 335-411 (SVDIEPESEQ…ASRNSEVSLP (77 aa)) are disordered. The segment covering 343-353 (EQTTAWQTSPT) has biased composition (polar residues).

This sequence belongs to the DNA mismatch repair MutL/HexB family.

Its function is as follows. This protein is involved in the repair of mismatches in DNA. It is required for dam-dependent methyl-directed DNA mismatch repair. May act as a 'molecular matchmaker', a protein that promotes the formation of a stable complex between two or more DNA-binding proteins in an ATP-dependent manner without itself being part of a final effector complex. The chain is DNA mismatch repair protein MutL from Shewanella pealeana (strain ATCC 700345 / ANG-SQ1).